The sequence spans 297 residues: uncharacterized protein (297 aa).

Disordered stretches follow at residues 19–133 (NEVD…EEKE), 147–214 (AEDD…VGIA), and 226–277 (EKTS…SKEA). A compositionally biased stretch (basic and acidic residues) spans 41–52 (EEPKNEKEKHDD). Residues 77 to 87 (PAEDDEEDEEF) show a composition bias toward acidic residues. Residues 88–101 (PSQSYGPSIPSNFR) are compositionally biased toward polar residues. Basic and acidic residues-rich tracts occupy residues 147–161 (AEDDEKNFQPKREEW) and 236–268 (IHQKKRDEKVKDAGYAQGERRPFDREKDMEVRG).

This is an uncharacterized protein from Caenorhabditis elegans.